A 141-amino-acid chain; its full sequence is ATP synthase epsilon chain (141 aa).

It belongs to the ATPase epsilon chain family. As to quaternary structure, F-type ATPases have 2 components, CF(1) - the catalytic core - and CF(0) - the membrane proton channel. CF(1) has five subunits: alpha(3), beta(3), gamma(1), delta(1), epsilon(1). CF(0) has three main subunits: a, b and c.

It is found in the cell inner membrane. Produces ATP from ADP in the presence of a proton gradient across the membrane. In Desulfatibacillum aliphaticivorans, this protein is ATP synthase epsilon chain.